The following is a 313-amino-acid chain: uncharacterized protein (313 aa).

The HTH deoR-type domain occupies 2-57 (KLERLLAMVVLLISKKQVQAAELAELFEVSVRTIYRDIETINRAGIPIVTSQGSGG). The segment at residues 19 to 38 (VQAAELAELFEVSVRTIYRD) is a DNA-binding region (H-T-H motif). One can recognise a WYL domain in the interval 131 to 210 (HTEDQKTLRE…KDLAILHQTF (80 aa)).

The protein resides in the cytoplasm. This is an uncharacterized protein from Bacillus subtilis (strain 168).